The primary structure comprises 302 residues: uncharacterized protein (302 aa).

Residues 19–90 (QWLFSVLKTA…GELDILFEDN (72 aa)) enclose the S4 RNA-binding domain. Aspartate 138 is a catalytic residue. The interval 182 to 205 (KGTINSPIGRDRSHPTRRRVSPGG) is disordered.

This sequence belongs to the pseudouridine synthase RluA family.

The enzyme catalyses a uridine in RNA = a pseudouridine in RNA. This is an uncharacterized protein from Bacillus subtilis (strain 168).